The following is a 474-amino-acid chain: Ribulose bisphosphate carboxylase large chain (474 aa).

Substrate is bound by residues Asn123 and Thr173. Lys175 acts as the Proton acceptor in catalysis. Residue Lys177 participates in substrate binding. The Mg(2+) site is built by Lys201, Asp203, and Glu204. N6-carboxylysine is present on Lys201. His293 acts as the Proton acceptor in catalysis. Residues Arg294, His326, and Ser378 each coordinate substrate.

Belongs to the RuBisCO large chain family. Type I subfamily. In terms of assembly, heterohexadecamer of 8 large chains and 8 small chains; disulfide-linked. The disulfide link is formed within the large subunit homodimers. The cofactor is Mg(2+). Post-translationally, the disulfide bond which can form in the large chain dimeric partners within the hexadecamer appears to be associated with oxidative stress and protein turnover.

The protein localises to the carboxysome. The catalysed reaction is 2 (2R)-3-phosphoglycerate + 2 H(+) = D-ribulose 1,5-bisphosphate + CO2 + H2O. It carries out the reaction D-ribulose 1,5-bisphosphate + O2 = 2-phosphoglycolate + (2R)-3-phosphoglycerate + 2 H(+). RuBisCO catalyzes two reactions: the carboxylation of D-ribulose 1,5-bisphosphate, the primary event in carbon dioxide fixation, as well as the oxidative fragmentation of the pentose substrate in the photorespiration process. Both reactions occur simultaneously and in competition at the same active site. The protein is Ribulose bisphosphate carboxylase large chain of Synechococcus sp.